Here is a 700-residue protein sequence, read N- to C-terminus: Acyl-coenzyme A oxidase 3 (700 aa).

It belongs to the acyl-CoA oxidase family. As to quaternary structure, heteropentamer composed of five different subunits. FAD serves as cofactor.

Its subcellular location is the peroxisome. The enzyme catalyses a 2,3-saturated acyl-CoA + O2 = a (2E)-enoyl-CoA + H2O2. It functions in the pathway lipid metabolism; peroxisomal fatty acid beta-oxidation. Its function is as follows. Oxidizes aliphatic acyl-CoA substrates of different chain lengths such as hexanoyl-CoA, decanoyl-CoA and myristoyl-CoA as well as aromatic/heterocyclic ring-substituted chromogenic substrates, such as furylpropionyl-CoA. Of the above substrates, the efficiency of the enzyme, exhibits the following order: decanoyl-CoA &gt; myristoyl-CoA &gt; hexanoyl-CoA &gt; furyl-propionyl-CoA. This Yarrowia lipolytica (strain CLIB 122 / E 150) (Yeast) protein is Acyl-coenzyme A oxidase 3 (POX3).